A 509-amino-acid chain; its full sequence is tRNA-2-methylthio-N(6)-dimethylallyladenosine synthase (509 aa).

Polar residues predominate over residues 1-15 (MNEQQRLASQQVNSS). A disordered region spans residues 1–23 (MNEQQRLASQQVNSSTKKEEKDY). The 119-residue stretch at 66 to 184 (RKFYIRTYGC…LPYILKDAMF (119 aa)) folds into the MTTase N-terminal domain. C75, C111, C145, C221, C225, and C228 together coordinate [4Fe-4S] cluster. Positions 207–437 (RRGDIKAWVN…NALVNKLAIE (231 aa)) constitute a Radical SAM core domain. Residues 440–503 (DRYKGQIVEV…TWSLNGELVE (64 aa)) enclose the TRAM domain.

The protein belongs to the methylthiotransferase family. MiaB subfamily. As to quaternary structure, monomer. The cofactor is [4Fe-4S] cluster.

Its subcellular location is the cytoplasm. The enzyme catalyses N(6)-dimethylallyladenosine(37) in tRNA + (sulfur carrier)-SH + AH2 + 2 S-adenosyl-L-methionine = 2-methylsulfanyl-N(6)-dimethylallyladenosine(37) in tRNA + (sulfur carrier)-H + 5'-deoxyadenosine + L-methionine + A + S-adenosyl-L-homocysteine + 2 H(+). Catalyzes the methylthiolation of N6-(dimethylallyl)adenosine (i(6)A), leading to the formation of 2-methylthio-N6-(dimethylallyl)adenosine (ms(2)i(6)A) at position 37 in tRNAs that read codons beginning with uridine. The sequence is that of tRNA-2-methylthio-N(6)-dimethylallyladenosine synthase from Bacillus anthracis.